The following is a 270-amino-acid chain: Regulatory protein RecX (270 aa).

It belongs to the RecX family.

The protein resides in the cytoplasm. In terms of biological role, modulates RecA activity. The sequence is that of Regulatory protein RecX from Bacillus thuringiensis subsp. konkukian (strain 97-27).